Consider the following 238-residue polypeptide: Ribosomal RNA small subunit methyltransferase G (238 aa).

Residues Gly-78, Phe-83, Ala-129 to Glu-130, and Arg-148 each bind S-adenosyl-L-methionine. The disordered stretch occupies residues Glu-216–Lys-238.

Belongs to the methyltransferase superfamily. RNA methyltransferase RsmG family.

It localises to the cytoplasm. Its function is as follows. Specifically methylates the N7 position of a guanine in 16S rRNA. This Lactococcus lactis subsp. lactis (strain IL1403) (Streptococcus lactis) protein is Ribosomal RNA small subunit methyltransferase G.